The chain runs to 489 residues: Bifunctional protein HldE (489 aa).

The interval 1–330 (MFDFDGLSNA…RKILPPAFLA (330 aa)) is ribokinase. Residue 205–208 (NRKE) participates in ATP binding. The active site involves Asp-275. The tract at residues 358-489 (FTNGCFDILH…SLVKRAGGRA (132 aa)) is cytidylyltransferase.

The protein in the N-terminal section; belongs to the carbohydrate kinase PfkB family. It in the C-terminal section; belongs to the cytidylyltransferase family. As to quaternary structure, homodimer.

It catalyses the reaction D-glycero-beta-D-manno-heptose 7-phosphate + ATP = D-glycero-beta-D-manno-heptose 1,7-bisphosphate + ADP + H(+). It carries out the reaction D-glycero-beta-D-manno-heptose 1-phosphate + ATP + H(+) = ADP-D-glycero-beta-D-manno-heptose + diphosphate. It functions in the pathway nucleotide-sugar biosynthesis; ADP-L-glycero-beta-D-manno-heptose biosynthesis; ADP-L-glycero-beta-D-manno-heptose from D-glycero-beta-D-manno-heptose 7-phosphate: step 1/4. The protein operates within nucleotide-sugar biosynthesis; ADP-L-glycero-beta-D-manno-heptose biosynthesis; ADP-L-glycero-beta-D-manno-heptose from D-glycero-beta-D-manno-heptose 7-phosphate: step 3/4. Catalyzes the phosphorylation of D-glycero-D-manno-heptose 7-phosphate at the C-1 position to selectively form D-glycero-beta-D-manno-heptose-1,7-bisphosphate. Its function is as follows. Catalyzes the ADP transfer from ATP to D-glycero-beta-D-manno-heptose 1-phosphate, yielding ADP-D-glycero-beta-D-manno-heptose. The sequence is that of Bifunctional protein HldE from Nitrobacter hamburgensis (strain DSM 10229 / NCIMB 13809 / X14).